We begin with the raw amino-acid sequence, 357 residues long: D-alanine--D-alanine ligase (357 aa).

The 195-residue stretch at 145–339 (KEVMLYHGIQ…YGDLVMDIVN (195 aa)) folds into the ATP-grasp domain. Position 172 to 225 (172 to 225 (PFDFPVVVKPTSGGSSVGTHIIHNQEELESGLEDVFRFDNSAIVEEFTPGREFS)) interacts with ATP. Mg(2+) contacts are provided by aspartate 294, glutamate 306, and asparagine 308.

Belongs to the D-alanine--D-alanine ligase family. The cofactor is Mg(2+). Mn(2+) serves as cofactor.

Its subcellular location is the cytoplasm. The catalysed reaction is 2 D-alanine + ATP = D-alanyl-D-alanine + ADP + phosphate + H(+). The protein operates within cell wall biogenesis; peptidoglycan biosynthesis. In terms of biological role, cell wall formation. The protein is D-alanine--D-alanine ligase of Lacticaseibacillus paracasei (strain ATCC 334 / BCRC 17002 / CCUG 31169 / CIP 107868 / KCTC 3260 / NRRL B-441) (Lactobacillus paracasei).